A 624-amino-acid chain; its full sequence is Poly(A)-specific ribonuclease PARN (624 aa).

A divalent metal cation is bound by residues Asp-28 and Glu-30. One can recognise an R3H domain in the interval 171–238 (KKFIDQVIEK…ERHIVISKVD (68 aa)). The residue at position 213 (Lys-213) is an N6-acetyllysine. Positions 285 and 375 each coordinate a divalent metal cation. N6-acetyllysine is present on Lys-492. Ser-523 is subject to Phosphoserine. The residue at position 543 (Ser-543) is a Phosphoserine; by MAPKAPK2. The segment at 551-612 (GKRTLSPDPR…ELSLAGSVSD (62 aa)) is disordered. Positions 567-579 (RESEEVSDSELEQ) are enriched in acidic residues. Phosphoserine occurs at positions 569, 573, and 575. Residues 592-601 (KKSKKLKRMK) are compositionally biased toward basic residues. Phosphoserine occurs at positions 605, 609, and 613.

The protein belongs to the CAF1 family. In terms of assembly, homodimer. Found in a mRNA decay complex with RENT1, RENT2 and RENT3B. Interacts with KHSRP. Interacts with CELF1/CUGBP1. Interacts with ZC3HAV1 in an RNA-independent manner. Interacts with DHX36. The cofactor is Mg(2+). In terms of processing, phosphorylation by MAPKAPK2, preventing GADD45A mRNA degradation after genotoxic stress.

Its subcellular location is the nucleus. The protein localises to the cytoplasm. The protein resides in the nucleolus. It catalyses the reaction Exonucleolytic cleavage of poly(A) to 5'-AMP.. In terms of biological role, 3'-exoribonuclease that has a preference for poly(A) tails of mRNAs, thereby efficiently degrading poly(A) tails. Exonucleolytic degradation of the poly(A) tail is often the first step in the decay of eukaryotic mRNAs and is also used to silence certain maternal mRNAs translationally during oocyte maturation and early embryonic development. Interacts with both the 3'-end poly(A) tail and the 5'-end cap structure during degradation, the interaction with the cap structure being required for an efficient degradation of poly(A) tails. Involved in nonsense-mediated mRNA decay, a critical process of selective degradation of mRNAs that contain premature stop codons. Also involved in degradation of inherently unstable mRNAs that contain AU-rich elements (AREs) in their 3'-UTR, possibly via its interaction with KHSRP. Probably mediates the removal of poly(A) tails of AREs mRNAs, which constitutes the first step of destabilization. Also able to recognize poly(A) tails of microRNAs such as MIR21 and H/ACA box snoRNAs (small nucleolar RNAs) leading to leading to microRNAs degradation or snoRNA increased stability. The polypeptide is Poly(A)-specific ribonuclease PARN (Parn) (Mus musculus (Mouse)).